The sequence spans 691 residues: MEVLISRYRNIGIMAHIDAGKTTTTERILFYTGKQNRIGEVHDGAASMDWMEQEKERGITITSAATTCFWNDHRINIIDTPGHVDFTIEVERSLRVLDGAVAVFDGVAGVEPQSETVWRQADKYNVPRICFVNKMDRIGANFYRCVDMIKTKLGASPLVIQLPIGSEKDFKGIIDLISMKAIIWQEETLGAKFSYEDIPSDLLDKAQEYRNLLLDAAAEMDDEAINTYFESNDLPIDLLKKCVRSGTIKGKFVPVLCGSAFKNKGVQSLLDGVVDFLPSPIDVDVIIGTDPKDSEKKIEIKPSEKEKFVALAFKVMTDKFVGSLTFIRIYSGKLKSKSAVLNAGKNETEGIGRMLLMHANNREDINEAKVGDIVALVGLKKTITGDTLCSSDFPILLERMEFPDPVIEIAIEPKTTSDQEKLGVALNRLVAEDPSLRMSVNAESGQTILKGMGELHLEIIIDRMKREFNVEANVGAPQVAYRETITKSVEIDYTHKKQSGGAGQFAKVKIKFEPLEPGFGFQFESKIVGGAIPKEYIPGVQNGLELIKEGGIISGFPLIDFKATLLDGAFHDVDSSPLAFELAAKGAFKEMANKAGPKMLEPIMKVEIITPEEYMGDVMGDINSRRGSVVDMLDLGNNSKIITASVPLANMFGYINVLRSISQGRAQYSMHFSCYEQVPQYVVDELKLKYN.

A tr-type G domain is found at 6 to 281; the sequence is SRYRNIGIMA…GVVDFLPSPI (276 aa). GTP contacts are provided by residues 15-22, 79-83, and 133-136; these read AHIDAGKT, DTPGH, and NKMD.

Belongs to the TRAFAC class translation factor GTPase superfamily. Classic translation factor GTPase family. EF-G/EF-2 subfamily.

It is found in the cytoplasm. In terms of biological role, catalyzes the GTP-dependent ribosomal translocation step during translation elongation. During this step, the ribosome changes from the pre-translocational (PRE) to the post-translocational (POST) state as the newly formed A-site-bound peptidyl-tRNA and P-site-bound deacylated tRNA move to the P and E sites, respectively. Catalyzes the coordinated movement of the two tRNA molecules, the mRNA and conformational changes in the ribosome. This is Elongation factor G from Wolbachia pipientis subsp. Culex pipiens (strain wPip).